The sequence spans 377 residues: Palmitoyltransferase PFA4 (377 aa).

Residues 1 to 9 lie on the Cytoplasmic side of the membrane; sequence MAIKLKNRW. Residues 10-30 form a helical membrane-spanning segment; the sequence is LGVAIPAFLVALIGYGSHYFI. Residues 31 to 122 are Lumenal-facing; that stretch reads LSNFLSWNEQ…NCVGHSNFPH (92 aa). Residues 78–128 enclose the DHHC domain; it reads NYCKKCRVYKPERAHHCKTCNQCVLAMDHHCPWTLNCVGHSNFPHFMRFLF. The active-site S-palmitoyl cysteine intermediate is C108. The helical transmembrane segment at 123–143 threads the bilayer; it reads FMRFLFWVIFSTAYLLFLLIG. Topologically, residues 144-163 are cytoplasmic; that stretch reads RIYLLWSIRHTAFHHRSTSE. The chain crosses the membrane as a helical span at residues 164 to 184; the sequence is IIFICIMTPMDAFVLLTVSSL. Over 185-377 the chain is Lumenal; sequence LGRCIYNQCL…SDFGVDTELE (193 aa).

It belongs to the DHHC palmitoyltransferase family. PFA4 subfamily.

Its subcellular location is the endoplasmic reticulum membrane. The enzyme catalyses L-cysteinyl-[protein] + hexadecanoyl-CoA = S-hexadecanoyl-L-cysteinyl-[protein] + CoA. Its function is as follows. Mediates the reversible addition of palmitate to target proteins, thereby regulating their membrane association and biological function. The polypeptide is Palmitoyltransferase PFA4 (Kluyveromyces lactis (strain ATCC 8585 / CBS 2359 / DSM 70799 / NBRC 1267 / NRRL Y-1140 / WM37) (Yeast)).